The chain runs to 196 residues: Protein TEX261 (196 aa).

5 helical membrane-spanning segments follow: residues 3–23 (FMYL…TLAV), 42–62 (SRII…LYVF), 70–90 (IGVG…FPFI), 97–117 (FILS…FFAE), and 125–145 (VLAY…VSLS).

The protein belongs to the SVP26 family.

The protein resides in the membrane. The chain is Protein TEX261 (TEX261) from Homo sapiens (Human).